We begin with the raw amino-acid sequence, 428 residues long: Histone deacetylase 3 (428 aa).

Residues N3–E316 form a histone deacetylase region. H17, G21, and K25 together coordinate 1D-myo-inositol 1,4,5,6-tetrakisphosphate. The active site involves H135. Zn(2+) contacts are provided by D170, H172, and D259. R265 serves as a coordination point for 1D-myo-inositol 1,4,5,6-tetrakisphosphate. The disordered stretch occupies residues P381 to I428. 2 stretches are compositionally biased toward basic and acidic residues: residues S386–S405 and D415–I428.

The protein belongs to the histone deacetylase family. HD type 1 subfamily.

Its subcellular location is the nucleus. The protein resides in the chromosome. The protein localises to the cytoplasm. It localises to the cytosol. It catalyses the reaction N(6)-acetyl-L-lysyl-[histone] + H2O = L-lysyl-[histone] + acetate. The catalysed reaction is N(6)-acetyl-L-lysyl-[protein] + H2O = L-lysyl-[protein] + acetate. The enzyme catalyses N(6)-(2E)-butenoyl-L-lysyl-[protein] + H2O = (2E)-2-butenoate + L-lysyl-[protein]. It carries out the reaction N(6)-(2-hydroxyisobutanoyl)-L-lysyl-[protein] + H2O = 2-hydroxy-2-methylpropanoate + L-lysyl-[protein]. It catalyses the reaction N(6)-[(S)-lactoyl]-L-lysyl-[protein] + H2O = (S)-lactate + L-lysyl-[protein]. Inositol tetraphosphate (1D-myo-inositol 1,4,5,6-tetrakisphosphate) promotes the histone deacetylase activity by acting as an intermolecular glue between hdac3 and N-Cor repressor complex components. Its function is as follows. Histone deacetylase that catalyzes the deacetylation of lysine residues on the N-terminal part of the core histones (H2A, H2B, H3 and H4), and some other non-histone substrates. Histone deacetylation gives a tag for epigenetic repression and plays an important role in transcriptional regulation, cell cycle progression and developmental events. Histone deacetylases act via the formation of large multiprotein complexes, such as N-Cor repressor complex, which activate the histone deacetylase activity. Participates in the BCL6 transcriptional repressor activity by deacetylating the H3 'Lys-27' (H3K27) on enhancer elements, antagonizing EP300 acetyltransferase activity and repressing proximal gene expression. Also functions as a deacetylase for non-histone targets. In addition to protein deacetylase activity, also acts as a protein-lysine deacylase by recognizing other acyl groups: catalyzes removal of (2E)-butenoyl (crotonyl), lactoyl (lactyl) and 2-hydroxyisobutanoyl (2-hydroxyisobutyryl) acyl groups from lysine residues, leading to protein decrotonylation, delactylation and de-2-hydroxyisobutyrylation, respectively. The chain is Histone deacetylase 3 (hdac3) from Danio rerio (Zebrafish).